The chain runs to 327 residues: Tetraacyldisaccharide 4'-kinase (327 aa).

52–59 (TLGGAGKT) serves as a coordination point for ATP.

Belongs to the LpxK family.

It catalyses the reaction a lipid A disaccharide + ATP = a lipid IVA + ADP + H(+). It functions in the pathway glycolipid biosynthesis; lipid IV(A) biosynthesis; lipid IV(A) from (3R)-3-hydroxytetradecanoyl-[acyl-carrier-protein] and UDP-N-acetyl-alpha-D-glucosamine: step 6/6. Transfers the gamma-phosphate of ATP to the 4'-position of a tetraacyldisaccharide 1-phosphate intermediate (termed DS-1-P) to form tetraacyldisaccharide 1,4'-bis-phosphate (lipid IVA). The protein is Tetraacyldisaccharide 4'-kinase of Methylorubrum extorquens (strain PA1) (Methylobacterium extorquens).